The sequence spans 413 residues: Putative competence-damage inducible protein (413 aa).

The protein belongs to the CinA family.

In Pediococcus pentosaceus (strain ATCC 25745 / CCUG 21536 / LMG 10740 / 183-1w), this protein is Putative competence-damage inducible protein.